Here is a 146-residue protein sequence, read N- to C-terminus: Large ribosomal subunit protein uL24z (146 aa).

Disordered stretches follow at residues Met-1 to Arg-26 and Lys-121 to Asp-146. Basic residues predominate over residues Ser-9–His-18. Over residues Lys-121–Ser-138 the composition is skewed to basic and acidic residues.

Belongs to the universal ribosomal protein uL24 family.

This is Large ribosomal subunit protein uL24z (RPL26A) from Arabidopsis thaliana (Mouse-ear cress).